The chain runs to 194 residues: Fe/S biogenesis protein NfuA (194 aa).

Residues C151 and C154 each coordinate [4Fe-4S] cluster.

The protein belongs to the NfuA family. As to quaternary structure, homodimer. Requires [4Fe-4S] cluster as cofactor.

Involved in iron-sulfur cluster biogenesis. Binds a 4Fe-4S cluster, can transfer this cluster to apoproteins, and thereby intervenes in the maturation of Fe/S proteins. Could also act as a scaffold/chaperone for damaged Fe/S proteins. The chain is Fe/S biogenesis protein NfuA from Aliivibrio salmonicida (strain LFI1238) (Vibrio salmonicida (strain LFI1238)).